Consider the following 63-residue polypeptide: Small ribosomal subunit protein eS27 (63 aa).

Residues Cys-18, Cys-21, Cys-37, and Cys-40 each contribute to the Zn(2+) site. A C4-type zinc finger spans residues 18–40 (CLDCGNQQVVFDRAASYVQCIIC).

Belongs to the eukaryotic ribosomal protein eS27 family. Part of the 30S ribosomal subunit. Zn(2+) is required as a cofactor.

The sequence is that of Small ribosomal subunit protein eS27 from Methanothermobacter thermautotrophicus (strain ATCC 29096 / DSM 1053 / JCM 10044 / NBRC 100330 / Delta H) (Methanobacterium thermoautotrophicum).